The primary structure comprises 2531 residues: Mediator of RNA polymerase II transcription subunit 12 (2531 aa).

Disordered regions lie at residues M1–G41, Q204–M283, V584–D604, and T742–F762. The segment covering S210–T247 has biased composition (low complexity). A compositionally biased stretch (basic and acidic residues) spans R586–D604. Residue T745 is modified to Phosphothreonine. Residues S748 and S781 each carry the phosphoserine modification. Positions S748 to T757 are enriched in pro residues. Residues E796–D805 are compositionally biased toward basic and acidic residues. The interval E796–S824 is disordered. Residues S806 and S1356 each carry the phosphoserine modification. T1360 carries the phosphothreonine modification. Composition is skewed to polar residues over residues V1585 to S1595 and T1901 to S1910. Disordered regions lie at residues V1585–S1608, K1898–A2092, Q2114–P2218, and M2469–T2508. The span at G1919 to N1933 shows a compositional bias: basic residues. Low complexity-rich tracts occupy residues P1938–N2038 and Q2045–Q2055. Positions G2056–G2066 are enriched in gly residues. 3 stretches are compositionally biased toward low complexity: residues M2067–Q2080, R2121–Q2132, and N2139–Q2205. Gly residues predominate over residues M2469 to M2496. The span at V2497 to Q2507 shows a compositional bias: low complexity.

This sequence belongs to the Mediator complex subunit 12 family. As to quaternary structure, component of the Cdk8 module of the Mediator complex, composed of CycC, Cdk8, kto and skd.

The protein localises to the nucleus. Its function is as follows. Component of the Mediator complex, a coactivator involved in regulated gene transcription of nearly all RNA polymerase II-dependent genes. Mediator functions as a bridge to convey information from gene-specific regulatory proteins to the basal RNA polymerase II transcription machinery. Mediator is recruited to promoters by direct interactions with regulatory proteins and serves as a scaffold for the assembly of a functional preinitiation complex with RNA polymerase II and the general transcription factors. Required for leg and eye development and macrochaete specification or differentiation. This Drosophila melanogaster (Fruit fly) protein is Mediator of RNA polymerase II transcription subunit 12 (kto).